A 259-amino-acid polypeptide reads, in one-letter code: MSFVVVIPARYASTRLPGKPLADIHGKPMVQHVVEKALQSGADRVIVATDDERVHSALASFAEQAGVEVCMTSQDHQSGTERLAEVCRHYGFSADTIVVNVQGDEPLIPPAIIRQVADNLAAASAPMATLSVPIQDAEEAFNPNAVKVVTDKEGYALYFSRACIPWDRDRFAASDRAAGSHEQIGDHYQRHIGIYAYRAGFIQRYVDWAPSVLEQVEALEQLRVLWYGEKIHVAQALQAPPVGVDTQADLDKVRALLAN.

This sequence belongs to the KdsB family.

Its subcellular location is the cytoplasm. It catalyses the reaction 3-deoxy-alpha-D-manno-oct-2-ulosonate + CTP = CMP-3-deoxy-beta-D-manno-octulosonate + diphosphate. The protein operates within nucleotide-sugar biosynthesis; CMP-3-deoxy-D-manno-octulosonate biosynthesis; CMP-3-deoxy-D-manno-octulosonate from 3-deoxy-D-manno-octulosonate and CTP: step 1/1. It functions in the pathway bacterial outer membrane biogenesis; lipopolysaccharide biosynthesis. Activates KDO (a required 8-carbon sugar) for incorporation into bacterial lipopolysaccharide in Gram-negative bacteria. This chain is 3-deoxy-manno-octulosonate cytidylyltransferase, found in Aeromonas salmonicida (strain A449).